Here is a 402-residue protein sequence, read N- to C-terminus: Serine/threonine transporter SstT (402 aa).

A run of 8 helical transmembrane segments spans residues 17-37 (IAIGVVIGAILGLLIPKITVI), 44-64 (FVGGLKAIAPLLVSALVANAL), 78-98 (IIVLYLFGTFAAALTAVISHY), 138-158 (ALSQANYIGVLLWAVVFGFAM), 179-199 (IVRWIINLAPFGILGLVFDTI), 212-232 (VLILVLVGTMTFVALVINPII), 295-315 (MAGAAVTINVLTLAAVTTLGI), and 336-356 (ASGIAGGSLLLVPVACSLFGI).

It belongs to the dicarboxylate/amino acid:cation symporter (DAACS) (TC 2.A.23) family.

The protein localises to the cell membrane. The catalysed reaction is L-serine(in) + Na(+)(in) = L-serine(out) + Na(+)(out). It carries out the reaction L-threonine(in) + Na(+)(in) = L-threonine(out) + Na(+)(out). Its function is as follows. Involved in the import of serine and threonine into the cell, with the concomitant import of sodium (symport system). This is Serine/threonine transporter SstT from Streptococcus thermophilus (strain CNRZ 1066).